Reading from the N-terminus, the 473-residue chain is Phosphatidylserine synthase 1 (473 aa).

At 1–35 the chain is on the cytoplasmic side; sequence MAACVGSRTLSKDDVNYRLHFRMINEQQVEDITLE. A helical membrane pass occupies residues 36 to 56; that stretch reads FFYRPHTITLLSFTILSLMAF. Over 57-72 the chain is Lumenal; the sequence is AFTRDDSVPEENIWRG. Residues 73–93 traverse the membrane as a helical segment; the sequence is ILSVIFFFLIISVLAFPNGPF. The Cytoplasmic segment spans residues 94 to 102; it reads TRPHPAIWR. The helical transmembrane segment at 103-123 threads the bilayer; it reads MVFGLSVLYFLFLVFVLFLNF. Residues 124–186 lie on the Lumenal side of the membrane; sequence EQVKAVMYWL…AMKALLIRSY (63 aa). A helical transmembrane segment spans residues 187 to 207; the sequence is GLCWTISITWELTELFFMHLL. Over 208–216 the chain is Cytoplasmic; the sequence is PNFAECWWD. The helical transmembrane segment at 217–237 threads the bilayer; the sequence is QVILDILLCNGGGIWLGMVVC. The Lumenal segment spans residues 238 to 286; that stretch reads RFLEMRTYHWASFKDIHTTTGKIKRAVLQFTPASWTYVRWFDPKSSFQR. A helical transmembrane segment spans residues 287-307; the sequence is VAGIYLFMIIWQLTELNTFFL. At 308–319 the chain is on the cytoplasmic side; that stretch reads KHIFVFQASHPL. Residues 320 to 342 form a helical membrane-spanning segment; it reads SWGRILFIGIITAPTVRQYYAYL. Residues 343–355 are Lumenal-facing; it reads TDTQCKRVGTQCW. Residues 356–376 form a helical membrane-spanning segment; that stretch reads VFGVIAFLEAIVCIKFGQDLF. Topologically, residues 377–380 are cytoplasmic; that stretch reads SKTQ. A helical transmembrane segment spans residues 381–401; it reads ILYVVFWLLCVAFTTFLCLYG. The Lumenal segment spans residues 402 to 473; the sequence is MVWYAEYYGH…SKVTNGIGKK (72 aa). The disordered stretch occupies residues 420–473; that stretch reads EDSPYSPDASWLHSKFSKGADNSPPKHPVNSESHSSRRRNRHSRSKVTNGIGKK. Residues 455-464 are compositionally biased toward basic residues; it reads SRRRNRHSRS.

This sequence belongs to the phosphatidyl serine synthase family.

It localises to the endoplasmic reticulum membrane. It catalyses the reaction a 1,2-diacyl-sn-glycero-3-phosphoethanolamine + L-serine = a 1,2-diacyl-sn-glycero-3-phospho-L-serine + ethanolamine. It carries out the reaction a 1,2-diacyl-sn-glycero-3-phosphocholine + L-serine = a 1,2-diacyl-sn-glycero-3-phospho-L-serine + choline. Its pathway is phospholipid metabolism; phosphatidylserine biosynthesis. Its function is as follows. Catalyzes a base-exchange reaction in which the polar head group of phosphatidylethanolamine (PE) or phosphatidylcholine (PC) is replaced by L-serine. Catalyzes mainly the conversion of phosphatidylcholine but also converts, in vitro and to a lesser extent, phosphatidylethanolamine. This chain is Phosphatidylserine synthase 1 (PTDSS1), found in Gallus gallus (Chicken).